The sequence spans 344 residues: Protein pelota homolog (344 aa).

The protein belongs to the eukaryotic release factor 1 family. Pelota subfamily. As to quaternary structure, monomer. The cofactor is a divalent metal cation.

It is found in the cytoplasm. Its function is as follows. May function in recognizing stalled ribosomes, interact with stem-loop structures in stalled mRNA molecules, and effect endonucleolytic cleavage of the mRNA. May play a role in the release non-functional ribosomes and degradation of damaged mRNAs. Has endoribonuclease activity. The chain is Protein pelota homolog from Archaeoglobus fulgidus (strain ATCC 49558 / DSM 4304 / JCM 9628 / NBRC 100126 / VC-16).